We begin with the raw amino-acid sequence, 663 residues long: DNA ligase (663 aa).

NAD(+) contacts are provided by residues 34–38 (DYEYD), 83–84 (SL), and Glu-114. The active-site N6-AMP-lysine intermediate is Lys-116. Arg-137, Glu-171, Lys-286, and Lys-310 together coordinate NAD(+). Positions 404, 407, 422, and 427 each coordinate Zn(2+). A BRCT domain is found at 585–663 (TVESPLTGKN…ADEFIKLANG (79 aa)).

It belongs to the NAD-dependent DNA ligase family. LigA subfamily. The cofactor is Mg(2+). Mn(2+) serves as cofactor.

The catalysed reaction is NAD(+) + (deoxyribonucleotide)n-3'-hydroxyl + 5'-phospho-(deoxyribonucleotide)m = (deoxyribonucleotide)n+m + AMP + beta-nicotinamide D-nucleotide.. In terms of biological role, DNA ligase that catalyzes the formation of phosphodiester linkages between 5'-phosphoryl and 3'-hydroxyl groups in double-stranded DNA using NAD as a coenzyme and as the energy source for the reaction. It is essential for DNA replication and repair of damaged DNA. The sequence is that of DNA ligase from Brachyspira hyodysenteriae (strain ATCC 49526 / WA1).